Reading from the N-terminus, the 301-residue chain is Acetylglutamate kinase (301 aa).

Residues 68–69, R90, and N195 contribute to the substrate site; that span reads GG.

This sequence belongs to the acetylglutamate kinase family. ArgB subfamily.

It is found in the cytoplasm. The catalysed reaction is N-acetyl-L-glutamate + ATP = N-acetyl-L-glutamyl 5-phosphate + ADP. The protein operates within amino-acid biosynthesis; L-arginine biosynthesis; N(2)-acetyl-L-ornithine from L-glutamate: step 2/4. Functionally, catalyzes the ATP-dependent phosphorylation of N-acetyl-L-glutamate. This is Acetylglutamate kinase from Pseudomonas fluorescens (strain Pf0-1).